A 513-amino-acid chain; its full sequence is Gluconokinase (513 aa).

Residues lysine 16, threonine 261, glycine 300, and 412-416 (GFARS) each bind ATP.

This sequence belongs to the FGGY kinase family.

The enzyme catalyses D-gluconate + ATP = 6-phospho-D-gluconate + ADP + H(+). It functions in the pathway carbohydrate acid metabolism; D-gluconate degradation. Its activity is regulated as follows. Catabolite repression by gluconate. In Bacillus subtilis (strain 168), this protein is Gluconokinase (gntK).